Here is a 136-residue protein sequence, read N- to C-terminus: Large ribosomal subunit protein uL16 (136 aa).

The protein belongs to the universal ribosomal protein uL16 family. In terms of assembly, part of the 50S ribosomal subunit.

Binds 23S rRNA and is also seen to make contacts with the A and possibly P site tRNAs. This chain is Large ribosomal subunit protein uL16, found in Shewanella baltica (strain OS155 / ATCC BAA-1091).